Here is a 642-residue protein sequence, read N- to C-terminus: Mini-chromosome maintenance complex-binding protein (642 aa).

A compositionally biased stretch (polar residues) spans 151 to 161; the sequence is ARVSPSTSYTP. The interval 151–197 is disordered; sequence ARVSPSTSYTPSRHKRSYEDDDDMDLQPNKQKDQHAGARQAGSVGGL. Ser154 carries the post-translational modification Phosphoserine. The residue at position 160 (Thr160) is a Phosphothreonine. A phosphoserine mark is found at Ser167 and Ser298.

It belongs to the MCMBP family. Interacts with the MCM complex: associates with the MCM3-7 complex which lacks MCM2, while it does not interact with the MCM complex when MCM2 is present (MCM2-7 complex). Interacts with the RPA complex, when composed of all RPA1, RPA2 and RPA3 components, but not with RPA1 or RPA2 alone.

Its subcellular location is the nucleus. Functionally, associated component of the MCM complex that acts as a regulator of DNA replication. Binds to the MCM complex during late S phase and promotes the disassembly of the MCM complex from chromatin, thereby acting as a key regulator of pre-replication complex (pre-RC) unloading from replicated DNA. Can dissociate the MCM complex without addition of ATP; probably acts by destabilizing interactions of each individual subunits of the MCM complex. Required for sister chromatid cohesion. This chain is Mini-chromosome maintenance complex-binding protein (MCMBP), found in Homo sapiens (Human).